A 670-amino-acid polypeptide reads, in one-letter code: tRNA 5-methylaminomethyl-2-thiouridine biosynthesis bifunctional protein MnmC (670 aa).

The tract at residues 1 to 242 (MTFSVQHAEI…KRECLSGLKI (242 aa)) is tRNA (mnm(5)s(2)U34)-methyltransferase. Residues 269-670 (IGGGIASLCA…KKWLKGSKVE (402 aa)) form an FAD-dependent cmnm(5)s(2)U34 oxidoreductase region.

This sequence in the N-terminal section; belongs to the methyltransferase superfamily. tRNA (mnm(5)s(2)U34)-methyltransferase family. In the C-terminal section; belongs to the DAO family. It depends on FAD as a cofactor.

It is found in the cytoplasm. The enzyme catalyses 5-aminomethyl-2-thiouridine(34) in tRNA + S-adenosyl-L-methionine = 5-methylaminomethyl-2-thiouridine(34) in tRNA + S-adenosyl-L-homocysteine + H(+). In terms of biological role, catalyzes the last two steps in the biosynthesis of 5-methylaminomethyl-2-thiouridine (mnm(5)s(2)U) at the wobble position (U34) in tRNA. Catalyzes the FAD-dependent demodification of cmnm(5)s(2)U34 to nm(5)s(2)U34, followed by the transfer of a methyl group from S-adenosyl-L-methionine to nm(5)s(2)U34, to form mnm(5)s(2)U34. The polypeptide is tRNA 5-methylaminomethyl-2-thiouridine biosynthesis bifunctional protein MnmC (Haemophilus influenzae (strain PittGG)).